The chain runs to 231 residues: Putative carboxymethylenebutenolidase (231 aa).

Residues aspartate 169 and histidine 200 contribute to the active site.

It belongs to the dienelactone hydrolase family.

It carries out the reaction 2-(5-oxo-2,5-dihydrofuran-2-ylidene)acetate + H2O = 4-oxohex-2-enedioate + H(+). The sequence is that of Putative carboxymethylenebutenolidase from Azospirillum brasilense.